We begin with the raw amino-acid sequence, 384 residues long: Oxoeicosanoid receptor 1 (384 aa).

A disordered region spans residues 1–21; the sequence is MELHNLSSPSPSLSSSVLPPS. The Extracellular segment spans residues 1-58; it reads MELHNLSSPSPSLSSSVLPPSFSPSPSSAPSAFTTVGGSSGGPCHPTSSSLVSAFLAP. The N-linked (GlcNAc...) asparagine glycan is linked to Asn5. Residues 7-21 are compositionally biased toward low complexity; sequence SSPSPSLSSSVLPPS. The chain crosses the membrane as a helical span at residues 59–79; sequence ILALEFVLGLVGNSLALFIFC. The Cytoplasmic segment spans residues 80 to 87; it reads IHTRPWTS. The helical transmembrane segment at 88–108 threads the bilayer; that stretch reads NTVFLVSLVAADFLLISNLPL. Topologically, residues 109-129 are extracellular; it reads RVDYYLLHETWRFGAAACKVN. Cys126 and Cys198 are joined by a disulfide. The helical transmembrane segment at 130–152 threads the bilayer; it reads LFMLSTNRTASVVFLTAIALNRY. Topologically, residues 153-172 are cytoplasmic; that stretch reads LKVVQPHHVLSRASVGAAAR. Residues 173 to 193 form a helical membrane-spanning segment; sequence VAGGLWVGILLLNGHLLLSTF. Residues 194–215 lie on the Extracellular side of the membrane; the sequence is SGPSCLSYRVGTKPSASLRWHQ. The chain crosses the membrane as a helical span at residues 216-236; the sequence is ALYLLEFFLPLALILFAIVSI. At 237–256 the chain is on the cytoplasmic side; sequence GLTIRNRGLGGQAGPQRAMR. The helical transmembrane segment at 257-277 threads the bilayer; sequence VLAMVVAVYTICFLPSIIFGM. Over 278–297 the chain is Extracellular; it reads ASMVAFWLSACRSLDLCTQL. The helical transmembrane segment at 298–318 threads the bilayer; it reads FHGSLAFTYLNSVLDPVLYCF. Over 319 to 384 the chain is Cytoplasmic; sequence SSPNFLHQSR…SLEKEGSSQG (66 aa).

This sequence belongs to the G-protein coupled receptor 1 family. As to expression, expressed in various tissues except brain. Expression is more intense in liver, kidney, peripheral leukocyte, lung, and spleen than in other tissues. Highly expressed in eosinophils, neutrophils, and lung macrophages.

It localises to the membrane. In terms of biological role, receptor for eicosanoids and polyunsaturated fatty acids such as 5-oxo-6E,8Z,11Z,14Z-eicosatetraenoic acid (5-OXO-ETE), 5(S)-hydroperoxy-6E,8Z,11Z,14Z-eicosatetraenoic acid (5(S)-HPETE) and arachidonic acid. Seems to be coupled to the G(i)/G(o), families of heteromeric G proteins. The sequence is that of Oxoeicosanoid receptor 1 (OXER1) from Homo sapiens (Human).